A 642-amino-acid polypeptide reads, in one-letter code: Mini-chromosome maintenance complex-binding protein (642 aa).

A compositionally biased stretch (polar residues) spans 151 to 161; sequence ARVSPSTSYTP. The interval 151-200 is disordered; sequence ARVSPSTSYTPSRHKRSYEDDEDMDLQPNKQKDQHSGARQAGGLGGLHWR. S154 is modified (phosphoserine). T160 is modified (phosphothreonine). A phosphoserine mark is found at S167 and S298.

It belongs to the MCMBP family. In terms of assembly, interacts with the MCM complex: associates with the MCM3-7 complex which lacks MCM2, while it does not interact with the MCM complex when MCM2 is present (MCM2-7 complex). Interacts with the RPA complex, when composed of all RPA1, RPA2 and RPA3 components, but not with RPA1 or RPA2 alone.

The protein localises to the nucleus. Associated component of the MCM complex that acts as a regulator of DNA replication. Binds to the MCM complex during late S phase and promotes the disassembly of the MCM complex from chromatin, thereby acting as a key regulator of pre-replication complex (pre-RC) unloading from replicated DNA. Can dissociate the MCM complex without addition of ATP; probably acts by destabilizing interactions of each individual subunits of the MCM complex. Required for sister chromatid cohesion. The polypeptide is Mini-chromosome maintenance complex-binding protein (Mcmbp) (Rattus norvegicus (Rat)).